Consider the following 124-residue polypeptide: UPF0738 protein ABC2521 (124 aa).

The protein belongs to the UPF0738 family.

The chain is UPF0738 protein ABC2521 from Shouchella clausii (strain KSM-K16) (Alkalihalobacillus clausii).